Reading from the N-terminus, the 622-residue chain is 1,4-alpha-glucan branching enzyme GlgB (622 aa).

D300 functions as the Nucleophile in the catalytic mechanism. The active-site Proton donor is the E351.

It belongs to the glycosyl hydrolase 13 family. GlgB subfamily. As to quaternary structure, monomer.

It catalyses the reaction Transfers a segment of a (1-&gt;4)-alpha-D-glucan chain to a primary hydroxy group in a similar glucan chain.. The protein operates within glycan biosynthesis; glycogen biosynthesis. Catalyzes the formation of the alpha-1,6-glucosidic linkages in glycogen by scission of a 1,4-alpha-linked oligosaccharide from growing alpha-1,4-glucan chains and the subsequent attachment of the oligosaccharide to the alpha-1,6 position. The polypeptide is 1,4-alpha-glucan branching enzyme GlgB (Streptococcus agalactiae serotype V (strain ATCC BAA-611 / 2603 V/R)).